Reading from the N-terminus, the 96-residue chain is Co-chaperonin GroES (96 aa).

It belongs to the GroES chaperonin family. In terms of assembly, heptamer of 7 subunits arranged in a ring. Interacts with the chaperonin GroEL.

The protein resides in the cytoplasm. In terms of biological role, together with the chaperonin GroEL, plays an essential role in assisting protein folding. The GroEL-GroES system forms a nano-cage that allows encapsulation of the non-native substrate proteins and provides a physical environment optimized to promote and accelerate protein folding. GroES binds to the apical surface of the GroEL ring, thereby capping the opening of the GroEL channel. The sequence is that of Co-chaperonin GroES from Methylibium petroleiphilum (strain ATCC BAA-1232 / LMG 22953 / PM1).